A 440-amino-acid chain; its full sequence is GTPase Der (440 aa).

EngA-type G domains lie at 4 to 169 (PVVA…PEED) and 178 to 353 (IKVA…DQAA). GTP contacts are provided by residues 10–17 (GRPNVGKS), 57–61 (DTGGI), 120–123 (NKVD), 184–191 (GKPNVGKS), 231–235 (DTAGI), and 296–299 (NKWD). A KH-like domain is found at 354-438 (MRISTGVLND…PIKFILREKE (85 aa)).

It belongs to the TRAFAC class TrmE-Era-EngA-EngB-Septin-like GTPase superfamily. EngA (Der) GTPase family. As to quaternary structure, associates with the 50S ribosomal subunit.

Functionally, GTPase that plays an essential role in the late steps of ribosome biogenesis. The chain is GTPase Der from Acetivibrio thermocellus (strain ATCC 27405 / DSM 1237 / JCM 9322 / NBRC 103400 / NCIMB 10682 / NRRL B-4536 / VPI 7372) (Clostridium thermocellum).